A 777-amino-acid polypeptide reads, in one-letter code: CRISPR system single-strand-specific deoxyribonuclease Cas10/Csm1 (subtype III-A) (777 aa).

Positions 1 to 106 (MEIDELTALG…VYEADNLASG (106 aa)) constitute an HD domain. In terms of domain architecture, GGDEF spans 513-660 (RRLGVMKGDV…GRNRVFVVGR (148 aa)).

This sequence belongs to the CRISPR-associated Cas10/Csm1 family. Probably part of the Csm effector complex, that includes Cas10, Csm2, Csm3, Csm4, Csm5 and mature crRNA. Will form a homodimer in solution, interacts with Csm4, which is a tighter, better association than the homodimeric Cas10 and uses the same interface for interaction. A divalent metal cation serves as cofactor.

With respect to regulation, ssDNase activity is inhibited by EDTA. In terms of biological role, CRISPR (clustered regularly interspaced short palindromic repeat) is an adaptive immune system that provides protection against mobile genetic elements (viruses, transposable elements and conjugative plasmids). CRISPR clusters contain spacers, sequences complementary to antecedent mobile elements, and target invading nucleic acids. CRISPR clusters are transcribed and processed into CRISPR RNA (crRNA). The type III-A Csm effector complex binds crRNA and acts as a crRNA-guided RNase, DNase and cyclic oligoadenylate synthase; binding of target RNA cognate to the crRNA is required for all activities. Functionally, a single-strand deoxyribonuclease (ssDNase) which digests linear and circular ssDNA; has 5'-3' and 3'-5' exonuclease activity as well as a less efficient endonuclease activity. Has a minimal size requirement; 100 nucleotide ssDNA (nt) is more efficiently digested than 50 or 25 nt ssDNA, while 14 nt ssDNA is not cleaved at all. It has no activity on dsDNA or ssRNA. Its function is as follows. ssDNase activity is stimulated in the ternary Csm effector complex; binding of cognate target RNA activates the ssDNase, as the target RNA is degraded ssDNA activity decreases. When associated with the ternary Csm effector complex (the crRNA, Cas proteins and a cognate target ssRNA) synthesizes cyclic oligoadenylates (cOA) from ATP. cOAs are second messengers that stimulate the ssRNase activity of Csm6, inducing an antiviral state important for defense against invading nucleic acids. This Thermococcus onnurineus (strain NA1) protein is CRISPR system single-strand-specific deoxyribonuclease Cas10/Csm1 (subtype III-A).